We begin with the raw amino-acid sequence, 1119 residues long: Solute carrier family 38 member 10 (1119 aa).

A run of 10 helical transmembrane segments spans residues 4-24, 36-58, 84-104, 120-140, 153-173, 229-249, 272-292, 323-343, 345-365, and 378-398; these read AAAS…GVSV, IVLG…MFLV, LVET…YVVI, VGGT…VLPL, FSAM…LSSL, IFAS…FFGY, MLRV…ILPC, ALTL…PNVE, ILGL…PALI, and VVLW…LSVS. 2 disordered regions span residues 438-691 and 731-1071; these read AEDG…EEAG and KEIH…DGVI. 5 stretches are compositionally biased toward basic and acidic residues: residues 439–454, 466–475, 493–522, 544–559, and 592–603; these read EDGR…REEL, PGREDGKEAP, EAHR…ENKP, DSER…EVGK, and AKEDLGPGDRGL. At serine 612 the chain carries Phosphoserine. Residues 652 to 667 are compositionally biased toward pro residues; the sequence is PPLPAEKPAPGPGLPP. Basic and acidic residues-rich tracts occupy residues 668 to 677, 731 to 752, and 763 to 773; these read EPREQRDVER, KEIH…EVHQ, and EAPEGKARETV. Phosphothreonine is present on threonine 772. Serine 802 bears the Phosphoserine mark. 2 stretches are compositionally biased toward basic and acidic residues: residues 832 to 841 and 863 to 876; these read KLRDGQKDAA and PARE…RLAE. Residues 880–889 show a composition bias toward polar residues; that stretch reads GQSQDVTGGS. Phosphoserine occurs at positions 889, 965, and 997. Basic and acidic residues-rich tracts occupy residues 975–1005, 1012–1022, and 1033–1042; these read HRLD…RGGE, PRQRPEPELGL, and DNAKPNRDLK.

The protein belongs to the amino acid/polyamine transporter 2 family.

The protein localises to the membrane. The catalysed reaction is L-glutamate(out) = L-glutamate(in). The enzyme catalyses L-glutamine(out) = L-glutamine(in). It carries out the reaction L-alanine(in) = L-alanine(out). It catalyses the reaction L-serine(in) = L-serine(out). The catalysed reaction is L-leucine(in) = L-leucine(out). Functionally, facilitates bidirectional transport of amino acids. May act as a glutamate sensor that regulates glutamate-glutamine cycle and mTOR signaling in the brain. The transport mechanism remains to be elucidated. The sequence is that of Solute carrier family 38 member 10 from Homo sapiens (Human).